The following is a 209-amino-acid chain: Large ribosomal subunit protein uL3 (209 aa).

A disordered region spans residues 133–152; it reads THGNSLSHRVPGSIGQNQTP. Position 150 is an N5-methylglutamine (Gln-150).

The protein belongs to the universal ribosomal protein uL3 family. Part of the 50S ribosomal subunit. Forms a cluster with proteins L14 and L19. In terms of processing, methylated by PrmB.

One of the primary rRNA binding proteins, it binds directly near the 3'-end of the 23S rRNA, where it nucleates assembly of the 50S subunit. The polypeptide is Large ribosomal subunit protein uL3 (Yersinia pseudotuberculosis serotype O:1b (strain IP 31758)).